The sequence spans 233 residues: Lipoprotein-releasing system ATP-binding protein LolD (233 aa).

Residues 6 to 233 (LQCDNLCKRY…TAELSLMGAE (228 aa)) enclose the ABC transporter domain. ATP is bound at residue 42–49 (GSSGSGKS).

It belongs to the ABC transporter superfamily. Lipoprotein translocase (TC 3.A.1.125) family. As to quaternary structure, the complex is composed of two ATP-binding proteins (LolD) and two transmembrane proteins (LolC and LolE).

The protein localises to the cell inner membrane. Its function is as follows. Part of the ABC transporter complex LolCDE involved in the translocation of mature outer membrane-directed lipoproteins, from the inner membrane to the periplasmic chaperone, LolA. Responsible for the formation of the LolA-lipoprotein complex in an ATP-dependent manner. In Shigella flexneri, this protein is Lipoprotein-releasing system ATP-binding protein LolD.